A 217-amino-acid polypeptide reads, in one-letter code: 7-cyano-7-deazaguanine synthase (217 aa).

Residue 10 to 20 (FSGGQDSTTCL) participates in ATP binding. Residues cysteine 185, cysteine 194, cysteine 197, and cysteine 200 each contribute to the Zn(2+) site.

The protein belongs to the QueC family. Homodimer. It depends on Zn(2+) as a cofactor.

It carries out the reaction 7-carboxy-7-deazaguanine + NH4(+) + ATP = 7-cyano-7-deazaguanine + ADP + phosphate + H2O + H(+). It participates in purine metabolism; 7-cyano-7-deazaguanine biosynthesis. Functionally, catalyzes the ATP-dependent conversion of 7-carboxy-7-deazaguanine (CDG) to 7-cyano-7-deazaguanine (preQ(0)). The polypeptide is 7-cyano-7-deazaguanine synthase (Streptococcus mutans serotype c (strain ATCC 700610 / UA159)).